The sequence spans 895 residues: Putative endoplasmic reticulum metallopeptidase 1-A (895 aa).

Positions 1–30 (MLRRRGGPNELRDELNNSKNQPEDDQRTKR) are disordered. Residues 1–34 (MLRRRGGPNELRDELNNSKNQPEDDQRTKRGRES) lie on the Cytoplasmic side of the membrane. Over residues 10–30 (ELRDELNNSKNQPEDDQRTKR) the composition is skewed to basic and acidic residues. The helical transmembrane segment at 35–55 (IGFRHWIYFVLTVAIVYAGVV) threads the bilayer. The Lumenal segment spans residues 56-383 (ALHRKMPAVR…VVGLFTVYYS (328 aa)). H174 and D186 together coordinate Zn(2+). Residue E220 is the Proton acceptor of the active site. Zn(2+)-binding residues include E221, E247, and H323. The helical transmembrane segment at 384–404 (VNVGKLLNYIACFATYFLVVL) threads the bilayer. Residues 405–423 (RIRNRLYSVGDLAIAFKHH) are Cytoplasmic-facing. Residues 424-444 (VVAFLAMVITMLLIIAFVVQM) traverse the membrane as a helical segment. The Lumenal portion of the chain corresponds to 445-452 (DLVMCWYK). A helical membrane pass occupies residues 453-473 (MPEIVGALYVLPMLIAGAIVH). Residues 474–492 (SHYADNNRIRNVEMVQYDT) lie on the Cytoplasmic side of the membrane. A helical membrane pass occupies residues 493 to 513 (ILLSFASILFLMTFYNLSSAF). Topologically, residues 514 to 517 (YVLN) are lumenal. Residues 518 to 538 (NLILPVFKDIIIWALGLFGVI) traverse the membrane as a helical segment. The Cytoplasmic segment spans residues 539–544 (RRVTPR). The chain crosses the membrane as a helical span at residues 545–565 (VLFFTQLFCFLPTFVFAAYAI). Topologically, residues 566 to 586 (SQCVDFFVPVMGRLGNAINPE) are lumenal. Residues 587–607 (FIMGPLGLVIASGFILFVNNL) traverse the membrane as a helical segment. Residues 608–613 (FYISRR) lie on the Cytoplasmic side of the membrane. A helical membrane pass occupies residues 614–634 (MNYIIRLLFAIFALFILVLIT). At 635 to 895 (TKVGNPYEYS…GRSEIVVKIF (261 aa)) the chain is on the lumenal side. N-linked (GlcNAc...) asparagine glycosylation is found at N659, N702, and N758.

This sequence belongs to the peptidase M28 family. Zn(2+) serves as cofactor.

The protein localises to the endoplasmic reticulum membrane. The chain is Putative endoplasmic reticulum metallopeptidase 1-A from Caenorhabditis elegans.